Consider the following 334-residue polypeptide: 4-hydroxyproline 2-epimerase (334 aa).

Cysteine 91 (proton acceptor) is an active-site residue. Substrate is bound by residues 92–93, histidine 224, and aspartate 250; that span reads GH. The active-site Proton donor is the cysteine 254. 255-256 contributes to the substrate binding site; the sequence is GT.

It belongs to the proline racemase family.

It carries out the reaction trans-4-hydroxy-L-proline = cis-4-hydroxy-D-proline. Its function is as follows. Catalyzes the epimerization of trans-4-hydroxy-L-proline (t4LHyp) to cis-4-hydroxy-D-proline (c4DHyp). Is likely involved in a degradation pathway that converts t4LHyp to alpha-ketoglutarate. Displays no proline racemase activity. The protein is 4-hydroxyproline 2-epimerase of Spirosoma linguale (strain ATCC 33905 / DSM 74 / LMG 10896 / Claus 1).